The following is a 220-amino-acid chain: Ribosome assembly protein 3 (220 aa).

Residues 1–91 are disordered; that stretch reads MSAGDISAIN…VSDVELTDEE (91 aa). The span at 13–24 shows a compositional bias: basic residues; sequence SVKKNRRRKKRR. The segment covering 29 to 39 has biased composition (low complexity); sequence SSSDSSSSDPS. Residues 41 to 72 show a composition bias toward basic and acidic residues; that stretch reads ESEKEEIQNGAIEEHVGENGKSDHVFSKGNDE. The span at 73-91 shows a compositional bias: acidic residues; it reads DKQEDIAIEVSDVELTDEE. Serine 83 carries the post-translational modification Phosphoserine. At threonine 88 the chain carries Phosphothreonine. Serine 99 is subject to Phosphoserine.

Belongs to the RSA3 family. Associates with nucleolar pre-ribosomal particles. Interacts with DBP6. Together with DBP6, NOP8, URB1 and URB2, forms an RNA-independent complex, which is required during early maturation of nascent 60S ribosomal subunits.

Its subcellular location is the nucleus. It localises to the nucleolus. Functionally, required for efficient biogenesis of the 60S ribosomal subunit. The sequence is that of Ribosome assembly protein 3 (RSA3) from Saccharomyces cerevisiae (strain ATCC 204508 / S288c) (Baker's yeast).